The sequence spans 253 residues: MHLKEILAQFSFFTAIPVKSSASLEEIAESSYISPIIVGISLGLIESVAYLILYRILGELTGIVLLGIIELLRGFNHLDGLLDLGDALMIRGNREKKIKALKDVEVGSGGIGLLLVYLSIQIVALLKLDFSLYTIFYLISSNVLSMSLSLYILSTISPIPESNLGRIFHDKLKGKSTILLLELIPFISLYNVIVFIIFYMIMYKICGSLGGSSGDIAGASITLSFPLFLITDEITNLNYSLLSILCYLFSHLH.

4 helical membrane-spanning segments follow: residues 33-53 (ISPI…YLIL), 106-126 (VGSG…VALL), 132-152 (LYTI…SLYI), and 178-198 (ILLL…FIIF).

Belongs to the CobS family. Requires Mg(2+) as cofactor.

The protein localises to the cell membrane. It carries out the reaction alpha-ribazole + adenosylcob(III)inamide-GDP = adenosylcob(III)alamin + GMP + H(+). The enzyme catalyses alpha-ribazole 5'-phosphate + adenosylcob(III)inamide-GDP = adenosylcob(III)alamin 5'-phosphate + GMP + H(+). It participates in cofactor biosynthesis; adenosylcobalamin biosynthesis; adenosylcobalamin from cob(II)yrinate a,c-diamide: step 7/7. Its function is as follows. Joins adenosylcobinamide-GDP and alpha-ribazole to generate adenosylcobalamin (Ado-cobalamin). Also synthesizes adenosylcobalamin 5'-phosphate from adenosylcobinamide-GDP and alpha-ribazole 5'-phosphate. In Saccharolobus solfataricus (strain ATCC 35092 / DSM 1617 / JCM 11322 / P2) (Sulfolobus solfataricus), this protein is Adenosylcobinamide-GDP ribazoletransferase.